A 341-amino-acid chain; its full sequence is Anthranilate phosphoribosyltransferase (341 aa).

5-phospho-alpha-D-ribose 1-diphosphate-binding positions include Gly84, 87 to 88, Thr92, 94 to 97, 112 to 120, and Ser124; these read GD, NVTT, and KCGNRSVSS. Position 84 (Gly84) interacts with anthranilate. Thr96 provides a ligand contact to Mg(2+). Asn115 provides a ligand contact to anthranilate. Residue Arg170 participates in anthranilate binding. Residues Asp228 and Glu229 each contribute to the Mg(2+) site.

It belongs to the anthranilate phosphoribosyltransferase family. Homodimer. Requires Mg(2+) as cofactor.

It catalyses the reaction N-(5-phospho-beta-D-ribosyl)anthranilate + diphosphate = 5-phospho-alpha-D-ribose 1-diphosphate + anthranilate. Its pathway is amino-acid biosynthesis; L-tryptophan biosynthesis; L-tryptophan from chorismate: step 2/5. Functionally, catalyzes the transfer of the phosphoribosyl group of 5-phosphorylribose-1-pyrophosphate (PRPP) to anthranilate to yield N-(5'-phosphoribosyl)-anthranilate (PRA). The protein is Anthranilate phosphoribosyltransferase of Corynebacterium diphtheriae (strain ATCC 700971 / NCTC 13129 / Biotype gravis).